A 76-amino-acid polypeptide reads, in one-letter code: Zinc finger protein 706 (76 aa).

Residues 1 to 13 show a composition bias toward low complexity; the sequence is MARGQQKIQSQQK. Disordered stretches follow at residues 1–32 and 53–76; these read MARG…QKAA and TFKQ…DVQA. Over residues 14-25 the composition is skewed to basic residues; the sequence is NAKKQAGQKKKQ. A C2H2-type zinc finger spans residues 39–62; that stretch reads YTCTVCRTQMPDPKTFKQHFESKH. Over residues 53–62 the composition is skewed to basic and acidic residues; sequence TFKQHFESKH.

It is found in the cytoplasm. It localises to the nucleus. Functionally, transcription repressor involved in the exit of embryonic stem cells (ESCs) from self-renewal. Acts by repressing expression of KLF4. The protein is Zinc finger protein 706 of Homo sapiens (Human).